Consider the following 378-residue polypeptide: Erythronate-4-phosphate dehydrogenase (378 aa).

Positions 45 and 66 each coordinate substrate. NAD(+) contacts are provided by D146 and T175. R208 is an active-site residue. D232 contributes to the NAD(+) binding site. E237 is a catalytic residue. The active-site Proton donor is the H254. Residue G257 coordinates NAD(+). Position 258 (Y258) interacts with substrate.

Belongs to the D-isomer specific 2-hydroxyacid dehydrogenase family. PdxB subfamily. As to quaternary structure, homodimer.

Its subcellular location is the cytoplasm. The catalysed reaction is 4-phospho-D-erythronate + NAD(+) = (R)-3-hydroxy-2-oxo-4-phosphooxybutanoate + NADH + H(+). It participates in cofactor biosynthesis; pyridoxine 5'-phosphate biosynthesis; pyridoxine 5'-phosphate from D-erythrose 4-phosphate: step 2/5. In terms of biological role, catalyzes the oxidation of erythronate-4-phosphate to 3-hydroxy-2-oxo-4-phosphonooxybutanoate. The chain is Erythronate-4-phosphate dehydrogenase from Escherichia coli (strain ATCC 8739 / DSM 1576 / NBRC 3972 / NCIMB 8545 / WDCM 00012 / Crooks).